The chain runs to 424 residues: ATP-sensitive inward rectifier potassium channel 8 (424 aa).

At 1–69 the chain is on the cytoplasmic side; the sequence is MLARKSIIPE…IFTTLVDLKW (69 aa). At Ser6 the chain carries Phosphoserine. A helical transmembrane segment spans residues 70-94; sequence RHTLVIFTMSFLCSWLLFAIMWWLV. The Extracellular segment spans residues 95-126; it reads AFAHGDIYAYMEKSGMEKSGLESTVCVTNVRS. Residues 127–138 constitute an intramembrane region (helical; Pore-forming); sequence FTSAFLFSIEVQ. Positions 139–145 form an intramembrane region, pore-forming; the sequence is VTIGFGG. The Selectivity filter signature appears at 140–145; it reads TIGFGG. Topologically, residues 146 to 154 are extracellular; that stretch reads RMMTEECPL. Residues 155 to 176 traverse the membrane as a helical segment; that stretch reads AITVLILQNIVGLIINAVMLGC. At 177 to 424 the chain is on the cytoplasmic side; sequence IFMKTAQAHR…PEGNQNTSES (248 aa). The segment at 375-424 is disordered; sequence SHQNSLRKRNSMRRNNSMRRNNSIRRNNSSLMVPKVQFMTPEGNQNTSES. The span at 387–404 shows a compositional bias: low complexity; sequence RRNNSMRRNNSIRRNNSS.

The protein belongs to the inward rectifier-type potassium channel (TC 1.A.2.1) family. KCNJ8 subfamily. As to quaternary structure, interacts with ABCC9. Predominantly detected in fetal and adult heart.

It localises to the membrane. It carries out the reaction K(+)(in) = K(+)(out). In terms of biological role, inward rectifier potassium channels are characterized by a greater tendency to allow potassium to flow into the cell rather than out of it. Their voltage dependence is regulated by the concentration of extracellular potassium; as external potassium is raised, the voltage range of the channel opening shifts to more positive voltages. The inward rectification is mainly due to the blockage of outward current by internal magnesium. This channel is activated by internal ATP and can be blocked by external barium. Can form a sulfonylurea-sensitive but ATP-insensitive potassium channel with ABCC9. This is ATP-sensitive inward rectifier potassium channel 8 (KCNJ8) from Homo sapiens (Human).